Here is a 937-residue protein sequence, read N- to C-terminus: Translation initiation factor IF-2 (937 aa).

Disordered stretches follow at residues 157 to 230 (KEAQ…AARK) and 250 to 346 (IKAP…ESNF). Residues 173-205 (EAQKADAAKPVEAKADESAQEEKKRVAAEESKK) show a composition bias toward basic and acidic residues. A compositionally biased stretch (low complexity) spans 252–265 (APEPAAPVAAKPAE). Over residues 267-293 (TLHKPADKKAGEKKDEKKPAVTADKKS) the composition is skewed to basic and acidic residues. Residues 295–304 (KSANVSSTWQ) show a composition bias toward polar residues. Residues 437–606 (PRAPVVTVMG…LLQAEVLELK (170 aa)) form the tr-type G domain. The segment at 446–453 (GHVDHGKT) is G1. GTP is bound at residue 446–453 (GHVDHGKT). Residues 471–475 (GITQH) are G2. Residues 492–495 (DTPG) form a G3 region. Residues 492-496 (DTPGH) and 546-549 (NKID) contribute to the GTP site. The interval 546–549 (NKID) is G4. Residues 582–584 (SAK) form a G5 region.

Belongs to the TRAFAC class translation factor GTPase superfamily. Classic translation factor GTPase family. IF-2 subfamily.

It is found in the cytoplasm. Its function is as follows. One of the essential components for the initiation of protein synthesis. Protects formylmethionyl-tRNA from spontaneous hydrolysis and promotes its binding to the 30S ribosomal subunits. Also involved in the hydrolysis of GTP during the formation of the 70S ribosomal complex. The sequence is that of Translation initiation factor IF-2 from Janthinobacterium sp. (strain Marseille) (Minibacterium massiliensis).